The chain runs to 138 residues: Large ribosomal subunit protein uL16 (138 aa).

Belongs to the universal ribosomal protein uL16 family. In terms of assembly, part of the 50S ribosomal subunit.

Its function is as follows. Binds 23S rRNA and is also seen to make contacts with the A and possibly P site tRNAs. This chain is Large ribosomal subunit protein uL16, found in Gluconobacter oxydans (strain 621H) (Gluconobacter suboxydans).